Here is a 428-residue protein sequence, read N- to C-terminus: Type II methyltransferase M.BanI (428 aa).

In terms of domain architecture, SAM-dependent MTase C5-type spans 3–417; that stretch reads IKFVDLFAGI…EDLFQNNVNE (415 aa). The active site involves C76.

Belongs to the class I-like SAM-binding methyltransferase superfamily. C5-methyltransferase family. Monomer.

The catalysed reaction is a 2'-deoxycytidine in DNA + S-adenosyl-L-methionine = a 5-methyl-2'-deoxycytidine in DNA + S-adenosyl-L-homocysteine + H(+). In terms of biological role, a methylase, recognizes the double-stranded sequence 5'-GGYRCC-3', methylates C-4 on both strands, and protects the DNA from cleavage by the BanI endonuclease. The protein is Type II methyltransferase M.BanI (banIM) of Aneurinibacillus aneurinilyticus (Bacillus aneurinolyticus).